The primary structure comprises 157 residues: Universal stress protein Sll1654 (157 aa).

Belongs to the universal stress protein A family.

The polypeptide is Universal stress protein Sll1654 (Synechocystis sp. (strain ATCC 27184 / PCC 6803 / Kazusa)).